Reading from the N-terminus, the 191-residue chain is Ribonuclease HII (191 aa).

The 185-residue stretch at 7–191 (ILMAGVDEVG…YSPVADLISK (185 aa)) folds into the RNase H type-2 domain. Positions 13, 14, and 103 each coordinate a divalent metal cation.

Belongs to the RNase HII family. Requires Mn(2+) as cofactor. Mg(2+) serves as cofactor.

The protein resides in the cytoplasm. The enzyme catalyses Endonucleolytic cleavage to 5'-phosphomonoester.. Endonuclease that specifically degrades the RNA of RNA-DNA hybrids. The polypeptide is Ribonuclease HII (Legionella pneumophila subsp. pneumophila (strain Philadelphia 1 / ATCC 33152 / DSM 7513)).